A 168-amino-acid chain; its full sequence is Ubiquitin-fold modifier-conjugating enzyme 1 (168 aa).

The active-site Glycyl thioester intermediate is the Cys116.

This sequence belongs to the ubiquitin-conjugating enzyme family. UFC1 subfamily.

Its function is as follows. E2-like enzyme which forms an intermediate with UFM1 via a thioester linkage. The sequence is that of Ubiquitin-fold modifier-conjugating enzyme 1 from Trichoplax adhaerens (Trichoplax reptans).